The sequence spans 602 residues: Aspartate--tRNA(Asp/Asn) ligase (602 aa).

Glu191 is a binding site for L-aspartate. Residues 215-218 (QLYK) form an aspartate region. Arg237 serves as a coordination point for L-aspartate. Residues 237–239 (RDE) and Gln246 contribute to the ATP site. His465 is a binding site for L-aspartate. Glu499 is a binding site for ATP. Arg506 contacts L-aspartate. 551 to 554 (GLDR) contacts ATP.

It belongs to the class-II aminoacyl-tRNA synthetase family. Type 1 subfamily. As to quaternary structure, homodimer.

The protein localises to the cytoplasm. The catalysed reaction is tRNA(Asx) + L-aspartate + ATP = L-aspartyl-tRNA(Asx) + AMP + diphosphate. Its function is as follows. Aspartyl-tRNA synthetase with relaxed tRNA specificity since it is able to aspartylate not only its cognate tRNA(Asp) but also tRNA(Asn). Reaction proceeds in two steps: L-aspartate is first activated by ATP to form Asp-AMP and then transferred to the acceptor end of tRNA(Asp/Asn). The chain is Aspartate--tRNA(Asp/Asn) ligase from Treponema pallidum (strain Nichols).